Here is a 645-residue protein sequence, read N- to C-terminus: ATP-dependent zinc metalloprotease FtsH (645 aa).

At Met1–Lys6 the chain is on the cytoplasmic side. A helical membrane pass occupies residues Phe7–Leu27. The Periplasmic portion of the chain corresponds to Tyr28–Leu110. A helical membrane pass occupies residues Phe111–Phe131. Residues Ala132–Asn645 lie on the Cytoplasmic side of the membrane. An ATP-binding site is contributed by Gly204–Thr211. A Zn(2+)-binding site is contributed by His426. Residue Glu427 is part of the active site. Zn(2+) contacts are provided by His430 and Asp503. The segment at Ser623–Asn645 is disordered. The segment covering Glu634–Asn645 has biased composition (basic and acidic residues).

In the central section; belongs to the AAA ATPase family. The protein in the C-terminal section; belongs to the peptidase M41 family. In terms of assembly, homohexamer. It depends on Zn(2+) as a cofactor.

It is found in the cell inner membrane. In terms of biological role, acts as a processive, ATP-dependent zinc metallopeptidase for both cytoplasmic and membrane proteins. Plays a role in the quality control of integral membrane proteins. In Kosmotoga olearia (strain ATCC BAA-1733 / DSM 21960 / TBF 19.5.1), this protein is ATP-dependent zinc metalloprotease FtsH.